The chain runs to 137 residues: Large ribosomal subunit protein uL16 (137 aa).

It belongs to the universal ribosomal protein uL16 family. As to quaternary structure, part of the 50S ribosomal subunit.

Its function is as follows. Binds 23S rRNA and is also seen to make contacts with the A and possibly P site tRNAs. This is Large ribosomal subunit protein uL16 from Rhizobium etli (strain CIAT 652).